Here is a 572-residue protein sequence, read N- to C-terminus: Glutathione hydrolase 1 (572 aa).

Residues 1–22 (MSLVRTVTIVLFIIAFLQNAAA) form the signal peptide. Residue R99 participates in L-glutamate binding. N-linked (GlcNAc...) asparagine glycans are attached at residues N171 and N222. T368 functions as the Nucleophile in the catalytic mechanism. Residues T386, N388, E407, D410, 440 to 441 (SS), and 461 to 462 (GG) contribute to the L-glutamate site. N505 carries an N-linked (GlcNAc...) asparagine glycan. The interval 552 to 572 (GGRSELVAVSDPRKGGFPSGY) is disordered.

It belongs to the gamma-glutamyltransferase family. Expressed in embryo, roots and leaves. In mature plants, expression is restricted to vascular tissues of roots, leaves, flowers and siliques.

Its subcellular location is the secreted. The protein localises to the extracellular space. It is found in the apoplast. The enzyme catalyses an N-terminal (5-L-glutamyl)-[peptide] + an alpha-amino acid = 5-L-glutamyl amino acid + an N-terminal L-alpha-aminoacyl-[peptide]. It carries out the reaction glutathione + H2O = L-cysteinylglycine + L-glutamate. The catalysed reaction is an S-substituted glutathione + H2O = an S-substituted L-cysteinylglycine + L-glutamate. Its pathway is sulfur metabolism; glutathione metabolism. May play a role in preventing oxidative stress by metabolizing extracellular oxidized glutathione (GSSG). The sequence is that of Glutathione hydrolase 1 (GGT1) from Arabidopsis thaliana (Mouse-ear cress).